A 212-amino-acid chain; its full sequence is Large ribosomal subunit protein uL1 (212 aa).

This sequence belongs to the universal ribosomal protein uL1 family. Part of the 50S ribosomal subunit.

Binds directly to 23S rRNA. Probably involved in E site tRNA release. Functionally, protein L1 is also a translational repressor protein, it controls the translation of its operon by binding to its mRNA. The sequence is that of Large ribosomal subunit protein uL1 from Methanobrevibacter smithii (strain ATCC 35061 / DSM 861 / OCM 144 / PS).